Reading from the N-terminus, the 267-residue chain is S-adenosylmethionine decarboxylase proenzyme (267 aa).

The active-site Schiff-base intermediate with substrate; via pyruvic acid is S114. S114 carries the post-translational modification Pyruvic acid (Ser); by autocatalysis. Catalysis depends on H119, which acts as the Proton acceptor; for processing activity. The active-site Proton donor; for catalytic activity is the C142.

This sequence belongs to the prokaryotic AdoMetDC family. Type 2 subfamily. As to quaternary structure, heterooctamer of four alpha and four beta chains arranged as a tetramer of alpha/beta heterodimers. It depends on pyruvate as a cofactor. In terms of processing, is synthesized initially as an inactive proenzyme. Formation of the active enzyme involves a self-maturation process in which the active site pyruvoyl group is generated from an internal serine residue via an autocatalytic post-translational modification. Two non-identical subunits are generated from the proenzyme in this reaction, and the pyruvate is formed at the N-terminus of the alpha chain, which is derived from the carboxyl end of the proenzyme. The post-translation cleavage follows an unusual pathway, termed non-hydrolytic serinolysis, in which the side chain hydroxyl group of the serine supplies its oxygen atom to form the C-terminus of the beta chain, while the remainder of the serine residue undergoes an oxidative deamination to produce ammonia and the pyruvoyl group blocking the N-terminus of the alpha chain.

It catalyses the reaction S-adenosyl-L-methionine + H(+) = S-adenosyl 3-(methylsulfanyl)propylamine + CO2. It participates in amine and polyamine biosynthesis; S-adenosylmethioninamine biosynthesis; S-adenosylmethioninamine from S-adenosyl-L-methionine: step 1/1. Catalyzes the decarboxylation of S-adenosylmethionine to S-adenosylmethioninamine (dcAdoMet), the propylamine donor required for the synthesis of the polyamines spermine and spermidine from the diamine putrescine. The sequence is that of S-adenosylmethionine decarboxylase proenzyme from Erwinia tasmaniensis (strain DSM 17950 / CFBP 7177 / CIP 109463 / NCPPB 4357 / Et1/99).